Reading from the N-terminus, the 113-residue chain is Probable protein L3 (113 aa).

This chain is Probable protein L3, found in Bos taurus (Bovine).